A 172-amino-acid chain; its full sequence is Large ribosomal subunit protein uL10 (172 aa).

Belongs to the universal ribosomal protein uL10 family. Part of the ribosomal stalk of the 50S ribosomal subunit. The N-terminus interacts with L11 and the large rRNA to form the base of the stalk. The C-terminus forms an elongated spine to which L12 dimers bind in a sequential fashion forming a multimeric L10(L12)X complex.

Its function is as follows. Forms part of the ribosomal stalk, playing a central role in the interaction of the ribosome with GTP-bound translation factors. The polypeptide is Large ribosomal subunit protein uL10 (Bradyrhizobium sp. (strain ORS 278)).